A 260-amino-acid chain; its full sequence is POLG alternative reading frame (260 aa).

Disordered regions lie at residues 1–50 (MEPK…LRPR) and 108–219 (ARRG…RRGG). 3 stretches are compositionally biased toward low complexity: residues 36–48 (AGSS…LQLR), 116–154 (GRGA…GQPG), and 164–186 (AEPA…EAPG). The interval 104–130 (ANLRARRGDAWRGRGAPQRRAPAEARA) is required for nucleolar localization. 2 stretches are compositionally biased toward gly residues: residues 187–199 (LGLG…VRPR) and 209–219 (RGAGPGVRRGG).

In terms of assembly, interacts with C1QBP; the interaction results in nucleolar localization of C1QBP, probably due to prevention of C1QBP maturation and redirection from mitochondria to nucleoli. Undergoes proteolytic cleavage to produce a secreted C-terminal fragment.

The protein localises to the nucleus. It localises to the nucleolus. It is found in the secreted. In Homo sapiens (Human), this protein is POLG alternative reading frame.